A 213-amino-acid polypeptide reads, in one-letter code: Large ribosomal subunit protein uL3 (213 aa).

This sequence belongs to the universal ribosomal protein uL3 family. As to quaternary structure, part of the 50S ribosomal subunit. Forms a cluster with proteins L14 and L19.

Its function is as follows. One of the primary rRNA binding proteins, it binds directly near the 3'-end of the 23S rRNA, where it nucleates assembly of the 50S subunit. The chain is Large ribosomal subunit protein uL3 from Bifidobacterium longum subsp. infantis (strain ATCC 15697 / DSM 20088 / JCM 1222 / NCTC 11817 / S12).